We begin with the raw amino-acid sequence, 427 residues long: Glucose-1-phosphate adenylyltransferase (427 aa).

R40, H46, and R52 together coordinate AMP. Y114 is a binding site for alpha-D-glucose 1-phosphate. R130 serves as a coordination point for AMP. Alpha-D-glucose 1-phosphate-binding positions include G179, 194-195 (EK), and S212. R386 is an AMP binding site.

This sequence belongs to the bacterial/plant glucose-1-phosphate adenylyltransferase family. As to quaternary structure, homotetramer.

It catalyses the reaction alpha-D-glucose 1-phosphate + ATP + H(+) = ADP-alpha-D-glucose + diphosphate. It participates in glycan biosynthesis; glycogen biosynthesis. Its activity is regulated as follows. Allosterically activated by fructose-1,6-bisphosphate (F16BP) and inhibited by AMP. Functionally, involved in the biosynthesis of ADP-glucose, a building block required for the elongation reactions to produce glycogen. Catalyzes the reaction between ATP and alpha-D-glucose 1-phosphate (G1P) to produce pyrophosphate and ADP-Glc. In Cronobacter sakazakii (strain ATCC BAA-894) (Enterobacter sakazakii), this protein is Glucose-1-phosphate adenylyltransferase.